A 597-amino-acid polypeptide reads, in one-letter code: UvrABC system protein C (597 aa).

The 79-residue stretch at 15-93 folds into the GIY-YIG domain; that stretch reads NSPGVYQYFD…IKKHQPRFNV (79 aa). Residues 207-242 form the UVR domain; the sequence is KDSLQRFRNQMKQHSEKMEFEDAQRIKNKIDVLENY.

It belongs to the UvrC family. In terms of assembly, interacts with UvrB in an incision complex.

Its subcellular location is the cytoplasm. Its function is as follows. The UvrABC repair system catalyzes the recognition and processing of DNA lesions. UvrC both incises the 5' and 3' sides of the lesion. The N-terminal half is responsible for the 3' incision and the C-terminal half is responsible for the 5' incision. The protein is UvrABC system protein C of Christiangramia forsetii (strain DSM 17595 / CGMCC 1.15422 / KT0803) (Gramella forsetii).